The primary structure comprises 92 residues: DNA-binding protein HU (92 aa).

Belongs to the bacterial histone-like protein family. In terms of assembly, homodimer.

Histone-like DNA-binding protein which is capable of wrapping DNA to stabilize it, and thus to prevent its denaturation under extreme environmental conditions. The protein is DNA-binding protein HU (hup) of Buchnera aphidicola subsp. Baizongia pistaciae (strain Bp).